Reading from the N-terminus, the 2332-residue chain is MKKVPIKPEQPEKLRAFNISTHSFSLHWSLPSGHVERYQVDLVPDSGFVTIRDLGGGEYQVDVSNVVPGTRYDITISSISTTYTSPVTRIVTTNVTKPGPPVFLAGERVGSAGILLSWNTPPNPNGRIISYIVKYKEVCPWMQTVYTQVRSKPDSLEVLLTNLNPGTTYEIKVAAENSAGIGVFSDPFLFQTAESAPGKVVNLTVEAYNASAVKLIWYLPRQPNGKITSFKISVKHARSGIVVKDVSIRVEDILTGKLPECNENSESFLWSTASPSPTLGRVTPPSRTTHSSSTLTQNEISSVWKEPISFVVTHLRPYTTYLFEVSAVTTEAGYIDSTIVRTPESVPEGPPQNCVTGNITGKSFSILWDPPTIVTGKFSYRVELYGPSGRILDNSTKDLKFAFTNLTPFTMYDVYIAAETSAGTGPKSNISVFTPPDVPGAVFDLQLAEVESTQVRITWKKPRQPNGIINQYRVKVLVPETGIILENTLLTGNNEYINDPMAPEIVNIVEPMVGLYEGSAEMSSDLHSLATFIYNSHPDKNFPARNRAEDQTSPVVTTRNQYITDIAAEQLSYVIRRLVPFTEHMISVSAFTIMGEGPPTVLSVRTRQQVPSSIKIINYKNISSSSILLYWDPPEYPNGKITHYTIYAMELDTNRAFQITTIDNSFLITGLKKYTKYKMRVAASTHVGESSLSEENDIFVRTSEDEPESSPQDVEVIDVTADEIRLKWSPPEKPNGIIIAYEVLYKNIDTLYMKNTSTTDIILRNLRPHTLYNISVRSYTRFGHGNQVSSLLSVRTSETVPDSAPENITYKNISSGEIELSFLPPSSPNGIIKKYTIYLKRSNGNEERTINTTSLTQNIKVLKKYTQYIIEVSASTLKGEGVRSAPISILTEEDAPDSPPQDFSVKQLSGVTVKLSWQPPLEPNGIILYYTVYVWNRSSLKTINVTETSLELSDLDYNVEYSAYVTASTRFGDGKTRSNIISFQTPEGAPSDPPKDVYYANLSSSSIILFWTPPSKPNGIIQYYSVYYRNTSGTFMQNFTLHEVTNDFDNMTVSTIIDKLTIFSYYTFWLTASTSVGNGNKSSDIIEVYTDQDIPEGFVGNLTYESISSTAINVSWVPPAQPNGLVFYYVSLILQQTPRHVRPPLVTYERSIYFDNLEKYTDYILKITPSTEKGFSDTYTAQLYIKTEEDVPETSPIINTFKNLSSTSVLLSWDPPVKPNGAIISYDLTLQGPNENYSFITSDNYIILEELSPFTLYSFFAAARTRKGLGPSSILFFYTDESVPLAPPQNLTLINCTSDFVWLKWSPSPLPGGIVKVYSFKIHEHETDTIYYKNISGFKTEAKLVGLEPVSTYSIRVSAFTKVGNGNQFSNVVKFTTQESVPDVVQNMQCMATSWQSVLVKWDPPKKANGIITQYMVTVERNSTKVSPQDHMYTFIKLLANTSYVFKVRASTSAGEGDESTCHVSTLPETVPSVPTNIAFSDVQSTSATLTWIRPDTILGYFQNYKITTQLRAQKCKEWESEECVEYQKIQYLYEAHLTEETVYGLKKFRWYRFQVAASTNAGYGNASNWISTKTLPGPPDGPPENVHVVATSPFSISISWSEPAVITGPTCYLIDVKSVDNDEFNISFIKSNEENKTIEIKDLEIFTRYSVVITAFTGNISAAYVEGKSSAEMIVTTLESAPKDPPNNMTFQKIPDEVTKFQLTFLPPSQPNGNIQVYQALVYREDDPTAVQIHNLSIIQKTNTFVIAMLEGLKGGHTYNISVYAVNSAGAGPKVPMRITMDIKAPARPKTKPTPIYDATGKLLVTSTTITIRMPICYYSDDHGPIKNVQVLVTETGAQHDGNVTKWYDAYFNKARPYFTNEGFPNPPCTEGKTKFSGNEEIYIIGADNACMIPGNEDKICNGPLKPKKQYLFKFRATNIMGQFTDSDYSDPVKTLGEGLSERTVEIILSVTLCILSIILLGTAIFAFARIRQKQKEGGTYSPQDAEIIDTKLKLDQLITVADLELKDERLTRPISKKSFLQHVEELCTNNNLKFQEEFSELPKFLQDLSSTDADLPWNRAKNRFPNIKPYNNNRVKLIADASVPGSDYINASYISGYLCPNEFIATQGPLPGTVGDFWRMVWETRAKTLVMLTQCFEKGRIRCHQYWPEDNKPVTVFGDIVITKLMEDVQIDWTIRDLKIERHGDCMTVRQCNFTAWPEHGVPENSAPLIHFVKLVRASRAHDTTPMIVHCSAGVGRTGVFIALDHLTQHINDHDFVDIYGLVAELRSERMCMVQNLAQYIFLHQCILDLLSNKGSNQPICFVNYSALQKMDSLDAMEGDVELEWEETTM.

The signal sequence occupies residues 1–35; sequence MKKVPIKPEQPEKLRAFNISTHSFSLHWSLPSGHV. Fibronectin type-III domains follow at residues 36 to 99, 100 to 195, 199 to 294, 350 to 438, 441 to 539, 514 to 606, 610 to 705, 710 to 799, 804 to 894, 899 to 988, 993 to 1093, 1098 to 1190, 1192 to 1282, 1287 to 1380, 1384 to 1470, 1474 to 1578, 1583 to 1681, and 1686 to 1787; these read ERYQ…TKPG, PPVF…TAES, KVVN…SSST, PPQN…PPDV, AVFD…SHPD, GLYE…SVRT, VPSS…TSED, SPQD…TSET, APEN…TEED, PPQD…TPEG, PPKD…TDQD, FVGN…TEED, PETS…TDES, PPQN…TQES, VVQN…LPET, VPTN…TLPG, PPEN…TLES, and PPNN…IKAP. The Extracellular segment spans residues 36-1947; the sequence is ERYQVDLVPD…GEGLSERTVE (1912 aa). N-linked (GlcNAc...) asparagine glycosylation occurs at Asn94. Asn202 and Asn394 each carry an N-linked (GlcNAc...) asparagine glycan. N-linked (GlcNAc...) asparagine glycans are attached at residues Asn944, Asn1038, Asn1080, and Asn1101. Asn1290 and Asn1295 each carry an N-linked (GlcNAc...) asparagine glycan. Asn1844 carries N-linked (GlcNAc...) asparagine glycosylation. The helical transmembrane segment at 1948–1968 threads the bilayer; sequence IILSVTLCILSIILLGTAIFA. Topologically, residues 1969–2332 are cytoplasmic; sequence FARIRQKQKE…VELEWEETTM (364 aa). The 257-residue stretch at 2036–2292 folds into the Tyrosine-protein phosphatase domain; that stretch reads FQEEFSELPK…IFLHQCILDL (257 aa). Cys2233 serves as the catalytic Phosphocysteine intermediate.

It belongs to the protein-tyrosine phosphatase family. Receptor class 2A subfamily. Interacts with TPRN. TPRN, CLIC5 and PTPQR form concentric rings at the base of stereocilia and may form a complex. As to expression, in developing kidney, it localizes to the basal membrane of podocytes, beginning when podocyte progenitors can first be identified in the embryonic kidney (at protein level). Expressed in lung and kidney.

It is found in the cell projection. The protein localises to the stereocilium. Its subcellular location is the apical cell membrane. It localises to the basal cell membrane. It catalyses the reaction a 1,2-diacyl-sn-glycero-3-phospho-(1D-myo-inositol-3,4,5-trisphosphate) + H2O = a 1,2-diacyl-sn-glycero-3-phospho-(1D-myo-inositol-4,5-bisphosphate) + phosphate. It carries out the reaction a 1,2-diacyl-sn-glycero-3-phospho-(1D-myo-inositol-3,4,5-trisphosphate) + H2O = a 1,2-diacyl-sn-glycero-3-phospho-(1D-myo-inositol-3,4-bisphosphate) + phosphate. The enzyme catalyses a 1,2-diacyl-sn-glycero-3-phospho-(1D-myo-inositol-3,5-bisphosphate) + H2O = a 1,2-diacyl-sn-glycero-3-phospho-(1D-myo-inositol-5-phosphate) + phosphate. The catalysed reaction is a 1,2-diacyl-sn-glycero-3-phospho-(1D-myo-inositol-3,5-bisphosphate) + H2O = a 1,2-diacyl-sn-glycero-3-phospho-(1D-myo-inositol-3-phosphate) + phosphate. In terms of biological role, dephosphorylates phosphatidylinositol phosphates, such as phosphatidylinositol 3,4,5-trisphosphate (PIP3) and phosphatidylinositol 3,5-diphosphates, with preference for PIP3. Phosphate can be hydrolyzed from the D3 and D5 positions in the inositol ring. Has low tyrosine-protein phosphatase activity in vitro; however, the relevance of such activity in vivo is unclear. Plays an important role in adipogenesis of mesenchymal stem cells (MSCs). Regulates the phosphorylation state of AKT1 by regulating the levels of PIP3 in MSCs and preadipocyte cells. Required for hair bundle maturation, a process that enables hair cells to detect and transmit sound and balance signals effectively, therefore affecting auditory function. May act by regulating the level of phosphatidylinositol 4,5-bisphosphate (PIP2) level in the basal region of hair bundles. This is Phosphatidylinositol phosphatase PTPRQ (PTPRQ) from Homo sapiens (Human).